Here is an 887-residue protein sequence, read N- to C-terminus: Bifunctional uridylyltransferase/uridylyl-removing enzyme (887 aa).

A uridylyltransferase region spans residues 1-337; sequence MINTSPLLNY…RLPNYERKIE (337 aa). Positions 339–699 are uridylyl-removing; that stretch reads VNDHFKIVDN…AHRKAAQDAV (361 aa). One can recognise an HD domain in the interval 457–579; it reads VDAHTLLLLR…LGDMEHLDYL (123 aa). ACT domains follow at residues 700–782 and 809–887; these read QIFI…LMQR and MVEI…ICQH.

Belongs to the GlnD family. Requires Mg(2+) as cofactor.

It carries out the reaction [protein-PII]-L-tyrosine + UTP = [protein-PII]-uridylyl-L-tyrosine + diphosphate. It catalyses the reaction [protein-PII]-uridylyl-L-tyrosine + H2O = [protein-PII]-L-tyrosine + UMP + H(+). Uridylyltransferase (UTase) activity is inhibited by glutamine, while glutamine activates uridylyl-removing (UR) activity. Functionally, modifies, by uridylylation and deuridylylation, the PII regulatory proteins (GlnB and homologs), in response to the nitrogen status of the cell that GlnD senses through the glutamine level. Under low glutamine levels, catalyzes the conversion of the PII proteins and UTP to PII-UMP and PPi, while under higher glutamine levels, GlnD hydrolyzes PII-UMP to PII and UMP (deuridylylation). Thus, controls uridylylation state and activity of the PII proteins, and plays an important role in the regulation of nitrogen assimilation and metabolism. The sequence is that of Bifunctional uridylyltransferase/uridylyl-removing enzyme from Acinetobacter baumannii (strain ACICU).